The primary structure comprises 429 residues: Glucose-6-phosphate isomerase (429 aa).

Glu-282 functions as the Proton donor in the catalytic mechanism. Catalysis depends on residues His-303 and Lys-418.

Belongs to the GPI family.

It is found in the cytoplasm. It carries out the reaction alpha-D-glucose 6-phosphate = beta-D-fructose 6-phosphate. It participates in carbohydrate biosynthesis; gluconeogenesis. It functions in the pathway carbohydrate degradation; glycolysis; D-glyceraldehyde 3-phosphate and glycerone phosphate from D-glucose: step 2/4. In terms of biological role, catalyzes the reversible isomerization of glucose-6-phosphate to fructose-6-phosphate. This is Glucose-6-phosphate isomerase from Mesomycoplasma hyopneumoniae (strain J / ATCC 25934 / NCTC 10110) (Mycoplasma hyopneumoniae).